Here is a 642-residue protein sequence, read N- to C-terminus: Mini-chromosome maintenance complex-binding protein (642 aa).

Residues 151-161 (ARVSPSTSYTP) are compositionally biased toward polar residues. The disordered stretch occupies residues 151–197 (ARVSPSTSYTPSRHKRSYEDDDDMDLQPNKQKDQHAGARQAGSVGGL). S154 is modified (phosphoserine). T160 carries the post-translational modification Phosphothreonine. Residues S167 and S298 each carry the phosphoserine modification.

This sequence belongs to the MCMBP family. Interacts with the MCM complex: associates with the MCM3-7 complex which lacks MCM2, while it does not interact with the MCM complex when MCM2 is present (MCM2-7 complex). Interacts with the RPA complex, when composed of all RPA1, RPA2 and RPA3 components, but not with RPA1 or RPA2 alone.

It localises to the nucleus. Functionally, associated component of the MCM complex that acts as a regulator of DNA replication. Binds to the MCM complex during late S phase and promotes the disassembly of the MCM complex from chromatin, thereby acting as a key regulator of pre-replication complex (pre-RC) unloading from replicated DNA. Can dissociate the MCM complex without addition of ATP; probably acts by destabilizing interactions of each individual subunits of the MCM complex. Required for sister chromatid cohesion. This is Mini-chromosome maintenance complex-binding protein (MCMBP) from Homo sapiens (Human).